Consider the following 142-residue polypeptide: ATP synthase epsilon chain (142 aa).

It belongs to the ATPase epsilon chain family. F-type ATPases have 2 components, CF(1) - the catalytic core - and CF(0) - the membrane proton channel. CF(1) has five subunits: alpha(3), beta(3), gamma(1), delta(1), epsilon(1). CF(0) has three main subunits: a, b and c.

The protein localises to the cell inner membrane. In terms of biological role, produces ATP from ADP in the presence of a proton gradient across the membrane. The protein is ATP synthase epsilon chain of Shewanella baltica (strain OS155 / ATCC BAA-1091).